We begin with the raw amino-acid sequence, 1103 residues long: Mediator of RNA polymerase II transcription subunit 14 (1103 aa).

Disordered regions lie at residues 1-63 (MPGV…GYKQ), 120-140 (VPPQDSGPLPGAPNGKPLGNQ), and 1054-1103 (LETK…ITID). Residues 1073–1103 (SGNTVQNARLENKSPQKAAATHSNADVITID) show a composition bias toward polar residues.

Belongs to the Mediator complex subunit 14 family. Component of the Mediator complex.

It localises to the nucleus. In terms of biological role, component of the Mediator complex, a coactivator involved in the regulated transcription of nearly all RNA polymerase II-dependent genes. Mediator functions as a bridge to convey information from gene-specific regulatory proteins to the basal RNA polymerase II transcription machinery. Mediator is recruited to promoters by direct interactions with regulatory proteins and serves as a scaffold for the assembly of a functional preinitiation complex with RNA polymerase II and the general transcription factors. The sequence is that of Mediator of RNA polymerase II transcription subunit 14 (rgr1) from Aspergillus terreus (strain NIH 2624 / FGSC A1156).